The following is a 513-amino-acid chain: Cytochrome P450 1A2 (513 aa).

O-linked (GlcNAc) serine glycosylation occurs at Ser-68. Residue Phe-225 participates in substrate binding. Cys-456 is a heme binding site.

This sequence belongs to the cytochrome P450 family. In terms of assembly, interacts with PGRMC1; the interaction requires PGRMC1 homodimerization. The cofactor is heme.

Its subcellular location is the endoplasmic reticulum membrane. It localises to the microsome membrane. It catalyses the reaction an organic molecule + reduced [NADPH--hemoprotein reductase] + O2 = an alcohol + oxidized [NADPH--hemoprotein reductase] + H2O + H(+). It carries out the reaction 17beta-estradiol + reduced [NADPH--hemoprotein reductase] + O2 = 2-hydroxy-17beta-estradiol + oxidized [NADPH--hemoprotein reductase] + H2O + H(+). The catalysed reaction is 17beta-estradiol + reduced [NADPH--hemoprotein reductase] + O2 = 4-hydroxy-17beta-estradiol + oxidized [NADPH--hemoprotein reductase] + H2O + H(+). The enzyme catalyses estrone + reduced [NADPH--hemoprotein reductase] + O2 = 2-hydroxyestrone + oxidized [NADPH--hemoprotein reductase] + H2O + H(+). It catalyses the reaction estrone + reduced [NADPH--hemoprotein reductase] + O2 = 4-hydroxyestrone + oxidized [NADPH--hemoprotein reductase] + H2O + H(+). It carries out the reaction cholesterol + reduced [NADPH--hemoprotein reductase] + O2 = 25-hydroxycholesterol + oxidized [NADPH--hemoprotein reductase] + H2O + H(+). The catalysed reaction is all-trans-retinol + reduced [NADPH--hemoprotein reductase] + O2 = all-trans-retinal + oxidized [NADPH--hemoprotein reductase] + 2 H2O + H(+). The enzyme catalyses all-trans-retinal + reduced [NADPH--hemoprotein reductase] + O2 = all-trans-retinoate + oxidized [NADPH--hemoprotein reductase] + H2O + 2 H(+). It catalyses the reaction (5Z,8Z,11Z,14Z)-eicosatetraenoate + reduced [NADPH--hemoprotein reductase] + O2 = (14R,15S)-epoxy-(5Z,8Z,11Z)-eicosatrienoate + oxidized [NADPH--hemoprotein reductase] + H2O + H(+). It carries out the reaction (5Z,8Z,11Z,14Z)-eicosatetraenoate + reduced [NADPH--hemoprotein reductase] + O2 = (14S,15R)-epoxy-(5Z,8Z,11Z)-eicosatrienoate + oxidized [NADPH--hemoprotein reductase] + H2O + H(+). The catalysed reaction is (5Z,8Z,11Z,14Z,17Z)-eicosapentaenoate + reduced [NADPH--hemoprotein reductase] + O2 = (17R,18S)-epoxy-(5Z,8Z,11Z,14Z)-eicosatetraenoate + oxidized [NADPH--hemoprotein reductase] + H2O + H(+). The enzyme catalyses (4Z,7Z,10Z,13Z,16Z,19Z)-docosahexaenoate + reduced [NADPH--hemoprotein reductase] + O2 = (19R,20S)-epoxy-(4Z,7Z,10Z,13Z,16Z)-docosapentaenoate + oxidized [NADPH--hemoprotein reductase] + H2O + H(+). It catalyses the reaction (5S)-hydroperoxy-(6E,8Z,11Z,14Z)-eicosatetraenoate = 5-oxo-(6E,8Z,11Z,14Z)-eicosatetraenoate + H2O. It carries out the reaction (12S)-hydroperoxy-(5Z,8Z,10E,14Z)-eicosatetraenoate = 12-oxo-(5Z,8Z,10E,14Z)-eicosatetraenoate + H2O. The catalysed reaction is (15S)-hydroperoxy-(5Z,8Z,11Z,13E)-eicosatetraenoate = 15-oxo-(5Z,8Z,11Z,13E)-eicosatetraenoate + H2O. The enzyme catalyses (13S)-hydroperoxy-(9Z,11E)-octadecadienoate = 13-oxo-(9Z,11E)-octadecadienoate + H2O. It catalyses the reaction (5Z,8Z,11Z,14Z)-eicosatetraenoate + reduced [NADPH--hemoprotein reductase] + O2 = 13-hydroxy-(5Z,8Z,11Z,14Z)-eicosatetraenoate + oxidized [NADPH--hemoprotein reductase] + H2O + H(+). It carries out the reaction (5Z,8Z,11Z,14Z)-eicosatetraenoate + reduced [NADPH--hemoprotein reductase] + O2 = 19-hydroxy-(5Z,8Z,11Z,14Z)-eicosatetraenoate + oxidized [NADPH--hemoprotein reductase] + H2O + H(+). The catalysed reaction is (9Z,12Z)-octadecadienoate + reduced [NADPH--hemoprotein reductase] + O2 = 11-hydroxy-(9Z,12Z)-octadecadienoate + oxidized [NADPH--hemoprotein reductase] + H2O + H(+). Its pathway is cofactor metabolism; retinol metabolism. It functions in the pathway steroid metabolism; cholesterol metabolism. It participates in lipid metabolism; arachidonate metabolism. Functionally, a cytochrome P450 monooxygenase involved in the metabolism of various endogenous substrates, including fatty acids, steroid hormones and vitamins. Mechanistically, uses molecular oxygen inserting one oxygen atom into a substrate, and reducing the second into a water molecule, with two electrons provided by NADPH via cytochrome P450 reductase (NADPH--hemoprotein reductase). Catalyzes the hydroxylation of carbon-hydrogen bonds. Exhibits high catalytic activity for the formation of hydroxyestrogens from estrone (E1) and 17beta-estradiol (E2), namely 2-hydroxy E1 and E2. Metabolizes cholesterol toward 25-hydroxycholesterol, a physiological regulator of cellular cholesterol homeostasis. May act as a major enzyme for all-trans retinoic acid biosynthesis in the liver. Catalyzes two successive oxidative transformation of all-trans retinol to all-trans retinal and then to the active form all-trans retinoic acid. Primarily catalyzes stereoselective epoxidation of the last double bond of polyunsaturated fatty acids (PUFA), displaying a strong preference for the (R,S) stereoisomer. Catalyzes bisallylic hydroxylation and omega-1 hydroxylation of PUFA. May also participate in eicosanoids metabolism by converting hydroperoxide species into oxo metabolites (lipoxygenase-like reaction, NADPH-independent). Plays a role in the oxidative metabolism of xenobiotics. Catalyzes the N-hydroxylation of heterocyclic amines and the O-deethylation of phenacetin. Metabolizes caffeine via N3-demethylation. This chain is Cytochrome P450 1A2 (Cyp1a2), found in Mus musculus (Mouse).